A 172-amino-acid chain; its full sequence is ATP synthase subunit b (172 aa).

A helical transmembrane segment spans residues leucine 27 to glutamate 47.

It belongs to the ATPase B chain family. F-type ATPases have 2 components, F(1) - the catalytic core - and F(0) - the membrane proton channel. F(1) has five subunits: alpha(3), beta(3), gamma(1), delta(1), epsilon(1). F(0) has four main subunits: a(1), b(1), b'(1) and c(10-14). The alpha and beta chains form an alternating ring which encloses part of the gamma chain. F(1) is attached to F(0) by a central stalk formed by the gamma and epsilon chains, while a peripheral stalk is formed by the delta, b and b' chains.

The protein localises to the cellular thylakoid membrane. Functionally, f(1)F(0) ATP synthase produces ATP from ADP in the presence of a proton or sodium gradient. F-type ATPases consist of two structural domains, F(1) containing the extramembraneous catalytic core and F(0) containing the membrane proton channel, linked together by a central stalk and a peripheral stalk. During catalysis, ATP synthesis in the catalytic domain of F(1) is coupled via a rotary mechanism of the central stalk subunits to proton translocation. Component of the F(0) channel, it forms part of the peripheral stalk, linking F(1) to F(0). This Prochlorococcus marinus (strain MIT 9313) protein is ATP synthase subunit b.